The chain runs to 530 residues: UDP-glucuronosyltransferase 2B17 (530 aa).

A signal peptide spans methionine 1–cysteine 23. Residue asparagine 65 is glycosylated (N-linked (GlcNAc...) asparagine). Lysine 136 carries the post-translational modification N6-succinyllysine. N-linked (GlcNAc...) asparagine glycans are attached at residues asparagine 316 and asparagine 483. Residues isoleucine 495–phenylalanine 515 traverse the membrane as a helical segment.

Belongs to the UDP-glycosyltransferase family. Expressed in various tissues including the liver, kidney, testis, uterus, placenta, mammary gland, adrenal gland, skin and prostate.

It is found in the endoplasmic reticulum membrane. The enzyme catalyses glucuronate acceptor + UDP-alpha-D-glucuronate = acceptor beta-D-glucuronoside + UDP + H(+). It catalyses the reaction 17alpha-estradiol + UDP-alpha-D-glucuronate = 17alpha-estradiol 3-O-(beta-D-glucuronate) + UDP + H(+). It carries out the reaction 17alpha-estradiol + UDP-alpha-D-glucuronate = 17alpha-estradiol 17-O-(beta-D-glucuronate) + UDP + H(+). The catalysed reaction is 17beta-estradiol + UDP-alpha-D-glucuronate = 17beta-estradiol 17-O-(beta-D-glucuronate) + UDP + H(+). The enzyme catalyses 17beta-hydroxy-5alpha-androstan-3-one + UDP-alpha-D-glucuronate = 5alpha-dihydrotestosterone 17-O-(beta-D-glucuronate) + UDP + H(+). It catalyses the reaction testosterone + UDP-alpha-D-glucuronate = testosterone 17-O-(beta-D-glucuronate) + UDP + H(+). UDP-glucuronosyltransferase (UGT) that catalyzes phase II biotransformation reactions in which lipophilic substrates are conjugated with glucuronic acid to increase the metabolite's water solubility, thereby facilitating excretion into either the urine or bile. Catalyzes the glucuronidation of endogenous steroid hormones such as androgens (epitestosterone, androsterone) and estrogens (estradiol, epiestradiol). This is UDP-glucuronosyltransferase 2B17 from Homo sapiens (Human).